We begin with the raw amino-acid sequence, 380 residues long: Cytochrome b (380 aa).

4 consecutive transmembrane segments (helical) span residues 34–54 (FGSL…FLAM), 78–99 (WLLR…YFHI), 114–134 (WNIG…GYVL), and 179–199 (FFTF…IHLL). Residues histidine 84 and histidine 98 each coordinate heme b. Heme b-binding residues include histidine 183 and histidine 197. Histidine 202 is an a ubiquinone binding site. Helical transmembrane passes span 227 to 247 (YKDL…STFA), 289 to 309 (LGGV…PIIH), 321 to 341 (IAKT…WIGG), and 348 to 368 (FITI…LLIP).

Belongs to the cytochrome b family. In terms of assembly, the cytochrome bc1 complex contains 3 respiratory subunits (MT-CYB, CYC1 and UQCRFS1), 2 core proteins (UQCRC1 and UQCRC2) and probably 6 low-molecular weight proteins. Requires heme b as cofactor.

The protein resides in the mitochondrion inner membrane. Its function is as follows. Component of the ubiquinol-cytochrome c reductase complex (complex III or cytochrome b-c1 complex) that is part of the mitochondrial respiratory chain. The b-c1 complex mediates electron transfer from ubiquinol to cytochrome c. Contributes to the generation of a proton gradient across the mitochondrial membrane that is then used for ATP synthesis. This is Cytochrome b (mt-cyb) from Pelophylax nigromaculatus (Black-spotted frog).